The primary structure comprises 309 residues: Assembly-complementing factor 4 (309 aa).

Disordered stretches follow at residues 1–80 (MSED…ASPI), 164–240 (KSIN…ENTP), and 286–309 (VRSE…LFKR). Basic and acidic residues-rich tracts occupy residues 13–24 (ELHKLSIVDKHS) and 34–44 (KQHEVQPESKS). Phosphoserine occurs at positions 44, 71, 74, 78, and 165. Positions 61–80 (SSPQRSTTNQSPVSDHASPI) are enriched in polar residues. Composition is skewed to low complexity over residues 174 to 188 (NNNV…LPNR), 205 to 214 (PSRSSESTPT), and 222 to 239 (PRNT…GENT). The segment covering 287-298 (RSEDEDDEEFEP) has biased composition (acidic residues). A Phosphoserine modification is found at serine 288.

May be involved in actin cytoskeleton organization and biogenesis. In Saccharomyces cerevisiae (strain ATCC 204508 / S288c) (Baker's yeast), this protein is Assembly-complementing factor 4 (ACF4).